A 154-amino-acid chain; its full sequence is UPF0756 membrane protein YtwI (154 aa).

4 helical membrane-spanning segments follow: residues 8–28 (FLILLLAIALIAKNQSLLFAV), 54–74 (WGVTIITIAVLVPIATGEIGF), 87–107 (WIALGAGIAVALIAKNGLTLL), and 117–137 (LVIGTILAVALFGGVAVGPLI).

The protein belongs to the UPF0756 family.

The protein resides in the cell membrane. This chain is UPF0756 membrane protein YtwI (ytwI), found in Bacillus subtilis (strain 168).